A 29-amino-acid polypeptide reads, in one-letter code: uncharacterized protein (29 aa).

The protein localises to the plastid. Its subcellular location is the chloroplast. This is an uncharacterized protein from Trieres chinensis (Marine centric diatom).